Consider the following 551-residue polypeptide: Cytochrome P450 monooxygenase sdnQ (551 aa).

A disordered region spans residues 1–23; the sequence is MDDPSIASGFQQGTGRTTGANGT. The segment covering 8-23 has biased composition (polar residues); sequence SGFQQGTGRTTGANGT. Asn-21 carries N-linked (GlcNAc...) asparagine glycosylation. Residues 41–57 form a helical membrane-spanning segment; sequence CIGTSLLVALLTTIIIY. Heme is bound at residue Cys-491.

This sequence belongs to the cytochrome P450 family. Heme is required as a cofactor.

It is found in the membrane. It functions in the pathway antibiotic biosynthesis. In terms of biological role, cytochrome P450 monooxygenase; part of the gene cluster that mediates the biosynthesis of sordarin and hypoxysordarin, glycoside antibiotics with a unique tetracyclic diterpene aglycone structure. First, the geranylgeranyl diphosphate synthase sdnC constructs GGDP from farnesyl diphosphate and isopentenyl diphosphate. The diterpene cyclase sdnA then catalyzes the cyclization of GGDP to afford cycloaraneosene. Cycloaraneosene is then hydroxylated four times by the putative cytochrome P450 monooxygenases sdnB, sdnE, sdnF and sdnH to give a hydroxylated cycloaraneosene derivative such as cycloaraneosene-8,9,13,19-tetraol. Although the order of the hydroxylations is unclear, at least C8, C9 and C13 of the cycloaraneosene skeleton are hydroxylated before the sordaricin formation. Dehydration of the 13-hydroxy group of the hydroxylated cycloaraneosene derivative might be catalyzed by an unassigned hypothetical protein such as sdnG and sdnP to construct the cyclopentadiene moiety. The FAD-dependent oxidoreductase sdnN is proposed to catalyze the oxidation at C9 of the hydroxylated cycloaraneosene derivative and also catalyze the Baeyer-Villiger oxidation to give the lactone intermediate. The presumed lactone intermediate would be hydrolyzed to give an acrolein moiety and a carboxylate moiety. Then, [4+2]cycloaddition would occur between the acrolein moiety and the cyclopentadiene moiety to give sordaricin. SdnN might also be involved in the [4+2]cycloaddition after the hypothesized oxidation to accommodate the oxidized product and prompt the [4+2]cycloaddition. GDP-6-deoxy-D-altrose may be biosynthesized from GDP-D-mannose by the putative GDP-mannose-4,6-dehydratase sdnI and the short-chain dehydrogenase sdnK. The glycosyltransferase sdnJ catalyzes the attachment of 6-deoxy-D-altrose onto the 19-hydroxy group of sordaricin to give 4'-O-demethylsordarin. The methyltransferase sdnD would complete the biosynthesis of sordarin. Sordarin can be further modified into hypoxysordarin. The unique acyl chain at the 3'-hydroxy group of hypoxysordarin would be constructed by an iterative type I PKS sdnO and the trans-acting polyketide methyltransferase sdnL. SdnL would be responsible for the introduction of an alpha-methyl group of the polyketide chain. Alternatively, the beta-lactamase-like protein sdnR might be responsible for the cleavage and transfer of the polyketide chain from the PKS sdnO to sordarin. Two putative cytochrome P450 monooxygenases, sdnQ and sdnT, might catalyze the epoxidations of the polyketide chain to complete the biosynthesis of hypoxysordarin. Transcriptional regulators sdnM and sdnS are presumably encoded for the transcriptional regulation of the expression of the sdn gene cluster. The polypeptide is Cytochrome P450 monooxygenase sdnQ (Sordaria araneosa (Pleurage araneosa)).